We begin with the raw amino-acid sequence, 591 residues long: Aspartate--tRNA(Asp/Asn) ligase (591 aa).

Residue Glu176 participates in L-aspartate binding. The segment at 200–203 (QLFK) is aspartate. Arg222 lines the L-aspartate pocket. ATP-binding positions include 222–224 (RDE) and Gln231. Residue His450 participates in L-aspartate binding. Glu484 is a binding site for ATP. Arg491 contacts L-aspartate. Residue 536-539 (GLDR) participates in ATP binding.

The protein belongs to the class-II aminoacyl-tRNA synthetase family. Type 1 subfamily. Homodimer.

The protein resides in the cytoplasm. It catalyses the reaction tRNA(Asx) + L-aspartate + ATP = L-aspartyl-tRNA(Asx) + AMP + diphosphate. Aspartyl-tRNA synthetase with relaxed tRNA specificity since it is able to aspartylate not only its cognate tRNA(Asp) but also tRNA(Asn). Reaction proceeds in two steps: L-aspartate is first activated by ATP to form Asp-AMP and then transferred to the acceptor end of tRNA(Asp/Asn). The polypeptide is Aspartate--tRNA(Asp/Asn) ligase (Bacillus mycoides (strain KBAB4) (Bacillus weihenstephanensis)).